A 273-amino-acid chain; its full sequence is 2,3,4,5-tetrahydropyridine-2,6-dicarboxylate N-succinyltransferase (273 aa).

Residues Arg104 and Asp141 each coordinate substrate.

The protein belongs to the transferase hexapeptide repeat family. Homotrimer.

It is found in the cytoplasm. The catalysed reaction is (S)-2,3,4,5-tetrahydrodipicolinate + succinyl-CoA + H2O = (S)-2-succinylamino-6-oxoheptanedioate + CoA. The protein operates within amino-acid biosynthesis; L-lysine biosynthesis via DAP pathway; LL-2,6-diaminopimelate from (S)-tetrahydrodipicolinate (succinylase route): step 1/3. The sequence is that of 2,3,4,5-tetrahydropyridine-2,6-dicarboxylate N-succinyltransferase from Thioalkalivibrio sulfidiphilus (strain HL-EbGR7).